Consider the following 713-residue polypeptide: Probable ATP-dependent RNA helicase DDX4 (713 aa).

The disordered stretch occupies residues 23–240 (EKDKYSSGAN…YIPPPPPEDE (218 aa)). Over residues 29–44 (SGANGDTFNRTSASSS) the composition is skewed to polar residues. The segment covering 71–80 (DIGESSKRET) has biased composition (basic and acidic residues). A compositionally biased stretch (gly residues) spans 85-95 (GGFGRGKGFGN). Over residues 178–190 (DSGSGDTFQSRSG) the composition is skewed to polar residues. S207 and S211 each carry phosphoserine. Positions 213–232 (KSEAEGGESSDIQGPKVTYI) are interaction with RANBP9. The Q motif motif lies at 273-301 (LTFEEANLCQTLNNNIAKAGYTKLTPVQK). The region spanning 304–487 (IPIVLAGRDL…GEFLKSNYLF (184 aa)) is the Helicase ATP-binding domain. An ATP-binding site is contributed by 317-324 (AQTGSGKT). Positions 431 to 434 (DEAD) match the DEAD box motif. In terms of domain architecture, Helicase C-terminal spans 515–660 (KLVEILRNIG…DVPAWLEEIA (146 aa)). Residues 689-703 (GKNTLNTAGISSAQA) show a composition bias toward polar residues. The tract at residues 689–713 (GKNTLNTAGISSAQAPNPVDDESWD) is disordered. S711 bears the Phosphoserine mark.

It belongs to the DEAD box helicase family. DDX4/VASA subfamily. Found in a mRNP complex, at least composed of TDRD1, TDRD6, TDRD7 and DDX4. Interacts with RANBP9. Interacts with RANBP10. Interacts with PIWIL2 and MAEL. Interacts with BMAL1 and CLOCK. Interacts with Tex19.1 and, probably, Tex19.2. Interacts with RBM46. In terms of tissue distribution, testis.

It is found in the cytoplasm. The protein resides in the perinuclear region. The enzyme catalyses ATP + H2O = ADP + phosphate + H(+). In terms of biological role, ATP-dependent RNA helicase required during spermatogenesis to repress transposable elements and preventing their mobilization, which is essential for the germline integrity. Acts via the piRNA metabolic process, which mediates the repression of transposable elements during meiosis by forming complexes composed of piRNAs and Piwi proteins and governs the methylation and subsequent repression of transposons. Involved in the secondary piRNAs metabolic process, the production of piRNAs in fetal male germ cells through a ping-pong amplification cycle. Required for PIWIL2 slicing-triggered piRNA biogenesis: helicase activity enables utilization of one of the slice cleavage fragments generated by PIWIL2 and processing these pre-piRNAs into piRNAs. This is Probable ATP-dependent RNA helicase DDX4 (Ddx4) from Rattus norvegicus (Rat).